We begin with the raw amino-acid sequence, 138 residues long: Ribulose bisphosphate carboxylase small subunit (138 aa).

The protein belongs to the RuBisCO small chain family. Heterohexadecamer of 8 large and 8 small subunits.

Its subcellular location is the plastid. It is found in the chloroplast. Functionally, ruBisCO catalyzes two reactions: the carboxylation of D-ribulose 1,5-bisphosphate, the primary event in carbon dioxide fixation, as well as the oxidative fragmentation of the pentose substrate in the photorespiration process. Both reactions occur simultaneously and in competition at the same active site. Although the small subunit is not catalytic it is essential for maximal activity. This Cyanidium caldarium (Red alga) protein is Ribulose bisphosphate carboxylase small subunit.